Consider the following 74-residue polypeptide: Anionic peptide clone 8 (74 aa).

The first 24 residues, 1–24 (MVSKSLIVLLLVSVLVSTFFTTEA), serve as a signal peptide directing secretion.

The protein belongs to the non-disulfide-bridged peptide (NDBP) superfamily. Long chain multifunctional peptide (group 2) family. In terms of tissue distribution, expressed by the venom gland.

The protein localises to the secreted. Its function is as follows. May be an antimicrobial peptide. This Tityus costatus (Brazilian scorpion) protein is Anionic peptide clone 8.